Here is a 161-residue protein sequence, read N- to C-terminus: Probable ubiquitin-conjugating enzyme E2 17 (161 aa).

Residues I15 to V161 enclose the UBC core domain. C99 serves as the catalytic Glycyl thioester intermediate.

The protein belongs to the ubiquitin-conjugating enzyme family.

It carries out the reaction S-ubiquitinyl-[E1 ubiquitin-activating enzyme]-L-cysteine + [E2 ubiquitin-conjugating enzyme]-L-cysteine = [E1 ubiquitin-activating enzyme]-L-cysteine + S-ubiquitinyl-[E2 ubiquitin-conjugating enzyme]-L-cysteine.. It participates in protein modification; protein ubiquitination. Functionally, accepts the ubiquitin from the E1 complex and catalyzes its covalent attachment to other proteins. The chain is Probable ubiquitin-conjugating enzyme E2 17 (UBC17) from Arabidopsis thaliana (Mouse-ear cress).